The sequence spans 583 residues: Protein NRT1/ PTR FAMILY 5.1 (583 aa).

A helical transmembrane segment spans residues 74–94; it reads WSGAVWITPIAGAYIADSYIG. T98 is modified (phosphothreonine). 10 helical membrane-spanning segments follow: residues 99–119, 134–154, 182–202, 210–230, 320–340, 361–381, 405–425, 446–466, 485–505, and 529–549; these read FTAS…AVTV, ASSL…IGAG, FFNW…LGLV, WGLG…VFYI, VLGL…WAQV, IPAA…VPMY, LGVG…VEVK, IFWL…NAIG, TFFT…VTMI, and YYYG…VWAA.

It belongs to the major facilitator superfamily. Proton-dependent oligopeptide transporter (POT/PTR) (TC 2.A.17) family. In terms of tissue distribution, expressed in flowers. Detected in stems, leaves and siliques.

It is found in the membrane. The polypeptide is Protein NRT1/ PTR FAMILY 5.1 (NPF5.1) (Arabidopsis thaliana (Mouse-ear cress)).